We begin with the raw amino-acid sequence, 212 residues long: Methylthioribulose-1-phosphate dehydratase (212 aa).

Positions 103 and 105 each coordinate Zn(2+).

Belongs to the aldolase class II family. MtnB subfamily. It depends on Zn(2+) as a cofactor.

The catalysed reaction is 5-(methylsulfanyl)-D-ribulose 1-phosphate = 5-methylsulfanyl-2,3-dioxopentyl phosphate + H2O. It functions in the pathway amino-acid biosynthesis; L-methionine biosynthesis via salvage pathway; L-methionine from S-methyl-5-thio-alpha-D-ribose 1-phosphate: step 2/6. In terms of biological role, catalyzes the dehydration of methylthioribulose-1-phosphate (MTRu-1-P) into 2,3-diketo-5-methylthiopentyl-1-phosphate (DK-MTP-1-P). The chain is Methylthioribulose-1-phosphate dehydratase from Sorangium cellulosum (strain So ce56) (Polyangium cellulosum (strain So ce56)).